We begin with the raw amino-acid sequence, 106 residues long: Nucleoid-associated protein RPD_0086 (106 aa).

The protein belongs to the YbaB/EbfC family. As to quaternary structure, homodimer.

The protein localises to the cytoplasm. The protein resides in the nucleoid. Its function is as follows. Binds to DNA and alters its conformation. May be involved in regulation of gene expression, nucleoid organization and DNA protection. In Rhodopseudomonas palustris (strain BisB5), this protein is Nucleoid-associated protein RPD_0086.